The sequence spans 95 residues: Large ribosomal subunit protein uL23 (95 aa).

This sequence belongs to the universal ribosomal protein uL23 family. Contacts protein L29, and trigger factor when it is bound to the ribosome. Part of the 50S ribosomal subunit.

One of the early assembly proteins it binds 23S rRNA. One of the proteins that surrounds the polypeptide exit tunnel on the outside of the ribosome. Forms the main docking site for trigger factor binding to the ribosome. This Geobacillus stearothermophilus (Bacillus stearothermophilus) protein is Large ribosomal subunit protein uL23.